Reading from the N-terminus, the 673-residue chain is UvrABC system protein B (673 aa).

Residues 26 to 414 (EGLEDGLAHQ…GGDVVDQVVR (389 aa)) form the Helicase ATP-binding domain. Position 39-46 (39-46 (GVTGSGKT)) interacts with ATP. Residues 92 to 115 (YYDYYQPEAYVPSSDTFIEKDASV) carry the Beta-hairpin motif. The 167-residue stretch at 431–597 (QVDDLLSEIR…GLNKKVVDIL (167 aa)) folds into the Helicase C-terminal domain. In terms of domain architecture, UVR spans 633–668 (LQKIHELEGLMMQHAQNLEFEEAAQIRDQLHQLREL).

The protein belongs to the UvrB family. Forms a heterotetramer with UvrA during the search for lesions. Interacts with UvrC in an incision complex.

Its subcellular location is the cytoplasm. In terms of biological role, the UvrABC repair system catalyzes the recognition and processing of DNA lesions. A damage recognition complex composed of 2 UvrA and 2 UvrB subunits scans DNA for abnormalities. Upon binding of the UvrA(2)B(2) complex to a putative damaged site, the DNA wraps around one UvrB monomer. DNA wrap is dependent on ATP binding by UvrB and probably causes local melting of the DNA helix, facilitating insertion of UvrB beta-hairpin between the DNA strands. Then UvrB probes one DNA strand for the presence of a lesion. If a lesion is found the UvrA subunits dissociate and the UvrB-DNA preincision complex is formed. This complex is subsequently bound by UvrC and the second UvrB is released. If no lesion is found, the DNA wraps around the other UvrB subunit that will check the other stand for damage. This chain is UvrABC system protein B, found in Shigella dysenteriae serotype 1 (strain Sd197).